A 274-amino-acid polypeptide reads, in one-letter code: Tyrosinase (274 aa).

Positions 38, 54, 63, 190, 194, and 216 each coordinate Cu cation.

It belongs to the tyrosinase family. It depends on Cu(2+) as a cofactor.

The catalysed reaction is 2 L-dopa + O2 = 2 L-dopaquinone + 2 H2O. It catalyses the reaction L-tyrosine + O2 = L-dopaquinone + H2O. This is a copper-containing oxidase that functions in the formation of pigments such as melanins and other polyphenolic compounds. The protein is Tyrosinase (melC2) of Streptomyces glaucescens.